The chain runs to 116 residues: Large ribosomal subunit protein bL17 (116 aa).

This sequence belongs to the bacterial ribosomal protein bL17 family. In terms of assembly, part of the 50S ribosomal subunit. Contacts protein L32.

The sequence is that of Large ribosomal subunit protein bL17 from Chloroflexus aurantiacus (strain ATCC 29366 / DSM 635 / J-10-fl).